A 1174-amino-acid chain; its full sequence is DNA-directed RNA polymerase subunit beta' (1174 aa).

Zn(2+) contacts are provided by Cys60, Cys62, Cys75, and Cys78. Mg(2+)-binding residues include Asp450, Asp452, and Asp454. Zn(2+)-binding residues include Cys795, Cys869, Cys876, and Cys879.

The protein belongs to the RNA polymerase beta' chain family. The RNAP catalytic core consists of 2 alpha, 1 beta, 1 beta' and 1 omega subunit. When a sigma factor is associated with the core the holoenzyme is formed, which can initiate transcription. Requires Mg(2+) as cofactor. It depends on Zn(2+) as a cofactor.

The catalysed reaction is RNA(n) + a ribonucleoside 5'-triphosphate = RNA(n+1) + diphosphate. In terms of biological role, DNA-dependent RNA polymerase catalyzes the transcription of DNA into RNA using the four ribonucleoside triphosphates as substrates. The protein is DNA-directed RNA polymerase subunit beta' of Clostridium kluyveri (strain ATCC 8527 / DSM 555 / NBRC 12016 / NCIMB 10680 / K1).